The primary structure comprises 430 residues: MSSVVVVGTQWGDEGKGKITDFLSENAEAIARYQGGNNAGHTIKFDGETYKLHLIPSGIFYKEKISVIGNGMVVDPKALVEELKYLHDKGVDTSNLRISNRAHIILPYHIRIDEADEERKGANKIGTTKKGIGPAYMDKAARVGIRIIDLLDKETFKEKLEHNLGEKNRLLERFYELEGFKLEDILEEYYGYGQQFKDYVCDTSVVLNDALDDGKRVLFEGAQGVMLDIDQGTYPFVTSSNPIAGGVTIGSGVGPSKINHVVGVAKAYTTRVGDGPFPTELFDSIGDNIREVGREYGTTTGRPRRVGWFDSVVVRHARRVSGLTDLSLTLLDVLTGIETLKICVAYKLDGKTITEFPASLKDLARCEPVYEELPGWTEDITEVKSLDDLPVNCRHYMERIAQLTGVQVSMFSVGPDRAQTHVVKSVWRLA.

Residues 12–18 and 40–42 contribute to the GTP site; these read GDEGKGK and GHT. Catalysis depends on Asp13, which acts as the Proton acceptor. Asp13 and Gly40 together coordinate Mg(2+). Residues 13–16, 38–41, Thr128, Arg142, Gln223, Thr238, and Arg302 contribute to the IMP site; these read DEGK and NAGH. The active-site Proton donor is the His41. Substrate is bound at residue 298–304; that stretch reads TTTGRPR. Residues Arg304, 330 to 332, and 412 to 414 contribute to the GTP site; these read LLD and SVG.

The protein belongs to the adenylosuccinate synthetase family. In terms of assembly, homodimer. The cofactor is Mg(2+).

The protein resides in the cytoplasm. The enzyme catalyses IMP + L-aspartate + GTP = N(6)-(1,2-dicarboxyethyl)-AMP + GDP + phosphate + 2 H(+). Its pathway is purine metabolism; AMP biosynthesis via de novo pathway; AMP from IMP: step 1/2. In terms of biological role, plays an important role in the de novo pathway of purine nucleotide biosynthesis. Catalyzes the first committed step in the biosynthesis of AMP from IMP. The protein is Adenylosuccinate synthetase of Listeria welshimeri serovar 6b (strain ATCC 35897 / DSM 20650 / CCUG 15529 / CIP 8149 / NCTC 11857 / SLCC 5334 / V8).